The sequence spans 242 residues: 7-cyano-7-deazaguanine synthase (242 aa).

The disordered stretch occupies residues 1 to 22 (MNSSSNEKNKDLNRKNFSSKTD). Position 32–42 (32–42 (LSGGLDSTTCL)) interacts with ATP. Residues cysteine 212, cysteine 221, cysteine 224, and cysteine 227 each contribute to the Zn(2+) site.

It belongs to the QueC family. Zn(2+) is required as a cofactor.

It carries out the reaction 7-carboxy-7-deazaguanine + NH4(+) + ATP = 7-cyano-7-deazaguanine + ADP + phosphate + H2O + H(+). It participates in purine metabolism; 7-cyano-7-deazaguanine biosynthesis. Catalyzes the ATP-dependent conversion of 7-carboxy-7-deazaguanine (CDG) to 7-cyano-7-deazaguanine (preQ(0)). This Leptospira interrogans serogroup Icterohaemorrhagiae serovar copenhageni (strain Fiocruz L1-130) protein is 7-cyano-7-deazaguanine synthase.